Here is a 210-residue protein sequence, read N- to C-terminus: CLAVATA3/ESR (CLE)-related protein 4D (210 aa).

An N-terminal signal peptide occupies residues 1 to 21 (MAKNAMLCLLILSVVLALAFA). A required for secretion from the host cytoplasm to the host apoplasm region spans residues 21–83 (ATNKKDDEEP…SNQLPNNNWM (63 aa)). 2 N-linked (GlcNAc...) asparagine glycosylation sites follow: Asn-32 and Asn-59. Positions 115-210 (RRKTGTHSQR…APAGPDPIHH (96 aa)) are disordered. Composition is skewed to basic and acidic residues over residues 125-137 (HHEE…EKRG), 144-158 (PIHH…EKRG), 165-179 (PIHH…EKRV), and 186-200 (PIHH…EKRG). The stretch at 127–135 (EETTLEQEK) is one A-1 repeat. A 4 X approximate repeat A region spans residues 129 to 198 (TTLEQEKRGA…HQDTKFEQEK (70 aa)). One copy of the CLE-1 repeat lies at 136 to 147 (RGAPAGPDPIHH). The tract at residues 136–210 (RGAPAGPDPI…APAGPDPIHH (75 aa)) is 4 X approximate repeat CLE. The stretch at 148–156 (QDTTFEQEK) is one A-2 repeat. The stretch at 157-168 (RGAPAGPDPIHH) is one CLE-2 repeat. The A-3 repeat unit spans residues 169-177 (QDTTLEQEK). One copy of the CLE-3 repeat lies at 178–189 (RVAGAGPDPIHH). An A-4 repeat occupies 190–198 (QDTKFEQEK). The stretch at 199 to 210 (RGAPAGPDPIHH) is one CLE-4 repeat.

This sequence belongs to the CLV3/ESR signal peptide family. Highly expressed exclusively within the dorsal esophageal gland cell during syncytium formation in host plants.

Its subcellular location is the secreted. The protein resides in the host cytoplasm. It is found in the host extracellular space. It localises to the extracellular space. The protein localises to the apoplast. Functionally, mimics host plant CLE extracellular signal peptides that regulate cell fate. May play a role in the differentiation or division of feeding cells (syncytia) induced in plant roots during infection. This is CLAVATA3/ESR (CLE)-related protein 4D (CLE-4D) from Globodera rostochiensis (Golden nematode worm).